The primary structure comprises 125 residues: MORF4 family-associated protein 1 (125 aa).

The interval 76 to 99 (ESALNHLQGAGGAEPRGPRAEKAD) is disordered. The stretch at 94–124 (RAEKADEKAQEMAKMAEMLVQLVRRIEKSES) forms a coiled coil.

This sequence belongs to the MORF4 family-associated protein family. In terms of assembly, found in a complex composed of MORF4L1, MRFAP1 and RB1. Interacts via its N-terminus with MORF4L1. Interacts with CSTB and MORF4L2.

It localises to the nucleus. The protein localises to the cytoplasm. Its subcellular location is the perinuclear region. This Rattus norvegicus (Rat) protein is MORF4 family-associated protein 1.